The sequence spans 403 residues: Chalcone synthase 2 (403 aa).

59–66 is a binding site for CoA; it reads RFQRMCES. The Acyl-thioester intermediate role is filled by C168. Position 220–221 (220–221) interacts with substrate; that stretch reads GD. Residue A313 participates in CoA binding.

It belongs to the thiolase-like superfamily. Chalcone/stilbene synthases family. In terms of assembly, homodimer.

The enzyme catalyses (E)-4-coumaroyl-CoA + 3 malonyl-CoA + 3 H(+) = 2',4,4',6'-tetrahydroxychalcone + 3 CO2 + 4 CoA. The protein operates within secondary metabolite biosynthesis; flavonoid biosynthesis. Functionally, the primary product of this enzyme is 4,2',4',6'-tetrahydroxychalcone (also termed naringenin-chalcone or chalcone) which can under specific conditions spontaneously isomerize into naringenin. This chain is Chalcone synthase 2 (CHS2), found in Oryza sativa subsp. japonica (Rice).